We begin with the raw amino-acid sequence, 495 residues long: ESX-2 secretion system ATPase EccB2 (495 aa).

Residues 43–63 (LALSMVLVAIAAGWMMLLNVL) traverse the membrane as a helical segment.

It belongs to the EccB family. In terms of assembly, part of the ESX-2 / type VII secretion system (T7SS), which is composed of cytosolic and membrane components.

Its subcellular location is the cell membrane. Functionally, an ATPase. This is ESX-2 secretion system ATPase EccB2 (eccB2) from Mycobacterium tuberculosis (strain CDC 1551 / Oshkosh).